The following is a 207-amino-acid chain: Large ribosomal subunit protein uL4 (207 aa).

The segment at 54–74 is disordered; it reads RSDVRGGGKKPYRQKGTGNAR.

The protein belongs to the universal ribosomal protein uL4 family. As to quaternary structure, part of the 50S ribosomal subunit.

Its function is as follows. One of the primary rRNA binding proteins, this protein initially binds near the 5'-end of the 23S rRNA. It is important during the early stages of 50S assembly. It makes multiple contacts with different domains of the 23S rRNA in the assembled 50S subunit and ribosome. Functionally, forms part of the polypeptide exit tunnel. In Magnetococcus marinus (strain ATCC BAA-1437 / JCM 17883 / MC-1), this protein is Large ribosomal subunit protein uL4.